A 256-amino-acid chain; its full sequence is GTP cyclohydrolase FolE2 (256 aa).

This sequence belongs to the GTP cyclohydrolase IV family.

It carries out the reaction GTP + H2O = 7,8-dihydroneopterin 3'-triphosphate + formate + H(+). Its pathway is cofactor biosynthesis; 7,8-dihydroneopterin triphosphate biosynthesis; 7,8-dihydroneopterin triphosphate from GTP: step 1/1. Its function is as follows. Converts GTP to 7,8-dihydroneopterin triphosphate. This Caldicellulosiruptor bescii (strain ATCC BAA-1888 / DSM 6725 / KCTC 15123 / Z-1320) (Anaerocellum thermophilum) protein is GTP cyclohydrolase FolE2.